A 479-amino-acid chain; its full sequence is tRNA-2-methylthio-N(6)-dimethylallyladenosine synthase (479 aa).

In terms of domain architecture, MTTase N-terminal spans 3–120 (KKLYIKTWGC…LPEMVNQVSE (118 aa)). 6 residues coordinate [4Fe-4S] cluster: C12, C49, C83, C157, C161, and C164. A Radical SAM core domain is found at 143 to 375 (KADGASAFVS…QQRLNQQSMA (233 aa)). The TRAM domain occupies 378–441 (RRMLETEQRI…PNSLRGELIR (64 aa)).

The protein belongs to the methylthiotransferase family. MiaB subfamily. Monomer. [4Fe-4S] cluster serves as cofactor.

The protein resides in the cytoplasm. The enzyme catalyses N(6)-dimethylallyladenosine(37) in tRNA + (sulfur carrier)-SH + AH2 + 2 S-adenosyl-L-methionine = 2-methylsulfanyl-N(6)-dimethylallyladenosine(37) in tRNA + (sulfur carrier)-H + 5'-deoxyadenosine + L-methionine + A + S-adenosyl-L-homocysteine + 2 H(+). Functionally, catalyzes the methylthiolation of N6-(dimethylallyl)adenosine (i(6)A), leading to the formation of 2-methylthio-N6-(dimethylallyl)adenosine (ms(2)i(6)A) at position 37 in tRNAs that read codons beginning with uridine. This Idiomarina loihiensis (strain ATCC BAA-735 / DSM 15497 / L2-TR) protein is tRNA-2-methylthio-N(6)-dimethylallyladenosine synthase.